A 276-amino-acid chain; its full sequence is MLMITSFANPRVAQAFVDYMATQGIILTIQQHAQSDVWLADESQAGRVRAELARFLENPADPRYLAASWQSGQTNSGLRYQRFPFFATLRHNAGPFTWAILLICIAVFILQNLLGDQPVMIWLAWPYDPSLQFEAWRYFSHAFMHFSLMHILFNLLWWWYLGGAVEKRIGSGKLVVITVISALLSGFVQHQFSGPWFGGLSGVVYALMGYVWLRGERDPQSGIYLQRGLILFSLVWLIAGWFDVFGMAIANGAHVAGLATGLAMAFVDTLHGRKRA.

6 helical membrane-spanning segments follow: residues 94–114 (GPFTWAILLICIAVFILQNLL), 142–162 (AFMHFSLMHILFNLLWWWYLG), 169–189 (IGSGKLVVITVISALLSGFVQ), 192–212 (FSGPWFGGLSGVVYALMGYVW), 229–249 (LILFSLVWLIAGWFDVFGMAI), and 252–272 (GAHVAGLATGLAMAFVDTLHG). The active-site Nucleophile is Ser-201. His-254 is an active-site residue.

Belongs to the peptidase S54 family.

It is found in the cell inner membrane. The catalysed reaction is Cleaves type-1 transmembrane domains using a catalytic dyad composed of serine and histidine that are contributed by different transmembrane domains.. Functionally, rhomboid-type serine protease that catalyzes intramembrane proteolysis. The protein is Rhomboid protease GlpG of Klebsiella pneumoniae (strain 342).